The sequence spans 86 residues: Large ribosomal subunit protein bL31B (86 aa).

It belongs to the bacterial ribosomal protein bL31 family. Type B subfamily. Part of the 50S ribosomal subunit.

The sequence is that of Large ribosomal subunit protein bL31B from Cupriavidus taiwanensis (strain DSM 17343 / BCRC 17206 / CCUG 44338 / CIP 107171 / LMG 19424 / R1) (Ralstonia taiwanensis (strain LMG 19424)).